We begin with the raw amino-acid sequence, 296 residues long: Thymidylate synthase (296 aa).

DUMP contacts are provided by residues Arg-23 and 157-158 (RR). The active-site Nucleophile is Cys-177. DUMP-binding positions include 198–201 (RSAD), Asn-209, and 239–241 (HIY). Asp-201 lines the (6R)-5,10-methylene-5,6,7,8-tetrahydrofolate pocket. Ala-295 contacts (6R)-5,10-methylene-5,6,7,8-tetrahydrofolate.

Belongs to the thymidylate synthase family. Bacterial-type ThyA subfamily. As to quaternary structure, homodimer.

The protein localises to the cytoplasm. The catalysed reaction is dUMP + (6R)-5,10-methylene-5,6,7,8-tetrahydrofolate = 7,8-dihydrofolate + dTMP. The protein operates within pyrimidine metabolism; dTTP biosynthesis. Catalyzes the reductive methylation of 2'-deoxyuridine-5'-monophosphate (dUMP) to 2'-deoxythymidine-5'-monophosphate (dTMP) while utilizing 5,10-methylenetetrahydrofolate (mTHF) as the methyl donor and reductant in the reaction, yielding dihydrofolate (DHF) as a by-product. This enzymatic reaction provides an intracellular de novo source of dTMP, an essential precursor for DNA biosynthesis. The protein is Thymidylate synthase of Zymomonas mobilis subsp. mobilis (strain ATCC 31821 / ZM4 / CP4).